Reading from the N-terminus, the 68-residue chain is Alpha-conotoxin-like Lt1.2 (68 aa).

An N-terminal signal peptide occupies residues 1–21 (MGMRMMFIMFMLVVLATTVDT). A propeptide spanning residues 22 to 48 (FTSDRALDAMNAAASNKASRLIALAVR) is cleaved from the precursor. 2 cysteine pairs are disulfide-bonded: C50/C56 and C51/C64. A lacks the Ser-Xaa-Pro motif that is crucial for potent interaction with nAChR region spans residues 52–54 (ARA). Glycine amide is present on G65.

This sequence belongs to the conotoxin A superfamily. Expressed by the venom duct.

The protein resides in the secreted. Alpha-conotoxins act on postsynaptic membranes, they bind to the nicotinic acetylcholine receptors (nAChR) and thus inhibit them. Has a distinct nAChR binding mode from other alpha-conotoxins, due to a different three residue motif (Ala-Xaa-Ala instead of the conserved Ser-Xaa-Pro motif). In Conus litteratus (Lettered cone), this protein is Alpha-conotoxin-like Lt1.2.